The primary structure comprises 304 residues: Ribosomal protein L11 methyltransferase (304 aa).

S-adenosyl-L-methionine is bound by residues Thr-155, Gly-176, Asp-198, and Asn-239.

The protein belongs to the methyltransferase superfamily. PrmA family.

The protein localises to the cytoplasm. It catalyses the reaction L-lysyl-[protein] + 3 S-adenosyl-L-methionine = N(6),N(6),N(6)-trimethyl-L-lysyl-[protein] + 3 S-adenosyl-L-homocysteine + 3 H(+). Functionally, methylates ribosomal protein L11. This is Ribosomal protein L11 methyltransferase from Caldicellulosiruptor bescii (strain ATCC BAA-1888 / DSM 6725 / KCTC 15123 / Z-1320) (Anaerocellum thermophilum).